A 471-amino-acid polypeptide reads, in one-letter code: Glutamate--tRNA ligase (471 aa).

The 'HIGH' region motif lies at 9 to 19 (PSPTGYLHVGG). Zn(2+) is bound by residues C98, C100, C125, and H127. Positions 237 to 241 (KLSKR) match the 'KMSKS' region motif. K240 is a binding site for ATP.

This sequence belongs to the class-I aminoacyl-tRNA synthetase family. Glutamate--tRNA ligase type 1 subfamily. As to quaternary structure, monomer. Requires Zn(2+) as cofactor.

Its subcellular location is the cytoplasm. It carries out the reaction tRNA(Glu) + L-glutamate + ATP = L-glutamyl-tRNA(Glu) + AMP + diphosphate. In terms of biological role, catalyzes the attachment of glutamate to tRNA(Glu) in a two-step reaction: glutamate is first activated by ATP to form Glu-AMP and then transferred to the acceptor end of tRNA(Glu). The chain is Glutamate--tRNA ligase from Salmonella gallinarum (strain 287/91 / NCTC 13346).